The sequence spans 193 residues: CDP-diacylglycerol--glycerol-3-phosphate 3-phosphatidyltransferase (193 aa).

4 helical membrane passes run 8–28 (ITLA…APFD), 39–59 (IPVA…TDWV), 88–108 (AALI…IVII), and 157–177 (LVSF…TVVS).

The protein belongs to the CDP-alcohol phosphatidyltransferase class-I family.

It localises to the cell membrane. It catalyses the reaction a CDP-1,2-diacyl-sn-glycerol + sn-glycerol 3-phosphate = a 1,2-diacyl-sn-glycero-3-phospho-(1'-sn-glycero-3'-phosphate) + CMP + H(+). It participates in phospholipid metabolism; phosphatidylglycerol biosynthesis; phosphatidylglycerol from CDP-diacylglycerol: step 1/2. This protein catalyzes the committed step to the synthesis of the acidic phospholipids. This Bacillus subtilis (strain 168) protein is CDP-diacylglycerol--glycerol-3-phosphate 3-phosphatidyltransferase (pgsA).